The sequence spans 368 residues: Probable endopolygalacturonase I (368 aa).

The signal sequence occupies residues 1–18 (MHSYQLLGLAAVGSLVSA). A propeptide spanning residues 19–31 (APAPSRVSEFAKK) is cleaved from the precursor. The cysteines at positions 35 and 50 are disulfide-linked. PbH1 repeat units follow at residues 140–161 (VEDS…ISVQ), 162–192 (ATNV…DISE), and 193–214 (STGV…AINS). The active-site Proton donor is the Asp207. The cysteines at positions 209 and 225 are disulfide-linked. His229 is a catalytic residue. PbH1 repeat units follow at residues 244–265 (VKNV…RIKT), 273–295 (VSEI…VIEQ), and 307–352 (STGI…DLSG). Asn246 carries an N-linked (GlcNAc...) asparagine glycan. Intrachain disulfides connect Cys335–Cys340 and Cys359–Cys368.

It belongs to the glycosyl hydrolase 28 family.

The protein resides in the secreted. It catalyses the reaction (1,4-alpha-D-galacturonosyl)n+m + H2O = (1,4-alpha-D-galacturonosyl)n + (1,4-alpha-D-galacturonosyl)m.. In terms of biological role, involved in maceration and soft-rotting of plant tissue. Hydrolyzes the 1,4-alpha glycosidic bonds of de-esterified pectate in the smooth region of the plant cell wall. The chain is Probable endopolygalacturonase I (pgaI) from Aspergillus niger (strain ATCC MYA-4892 / CBS 513.88 / FGSC A1513).